The following is a 301-amino-acid chain: rRNA methyltransferase 1, mitochondrial (301 aa).

The N-terminal 11 residues, 1–11 (MIRSRVNLARE), are a transit peptide targeting the mitochondrion. Positions 121-141 (YNNKNGQDSPHNDLNEGKSSS) are disordered.

The protein belongs to the class IV-like SAM-binding methyltransferase superfamily. RNA methyltransferase TrmH family.

It is found in the mitochondrion. The enzyme catalyses a guanosine in 21S rRNA + S-adenosyl-L-methionine = a 2'-O-methylguanosine in 21S rRNA + S-adenosyl-L-homocysteine + H(+). Its function is as follows. S-adenosyl-L-methionine-dependent 2'-O-ribose methyltransferase that catalyzes the formation of the 2'-O-methylguanosine corresponding to position 2270 in S.cerevisiae 21S mitochondrial large subunit ribosomal RNA (mtLSU rRNA), a universally conserved modification in the peptidyl transferase domain of the mtLSU rRNA. In Schizosaccharomyces pombe (strain 972 / ATCC 24843) (Fission yeast), this protein is rRNA methyltransferase 1, mitochondrial.